The sequence spans 341 residues: Glycerol-3-phosphate dehydrogenase [NAD(P)+] (341 aa).

Residues Ser14, Phe15, Arg35, and Lys108 each coordinate NADPH. Sn-glycerol 3-phosphate-binding residues include Lys108 and Gly136. Position 140 (Ala140) interacts with NADPH. 5 residues coordinate sn-glycerol 3-phosphate: Lys191, Asp244, Ser254, Arg255, and Asn256. The active-site Proton acceptor is Lys191. Residue Arg255 coordinates NADPH. NADPH-binding residues include Val279 and Glu281.

Belongs to the NAD-dependent glycerol-3-phosphate dehydrogenase family.

Its subcellular location is the cytoplasm. The catalysed reaction is sn-glycerol 3-phosphate + NAD(+) = dihydroxyacetone phosphate + NADH + H(+). The enzyme catalyses sn-glycerol 3-phosphate + NADP(+) = dihydroxyacetone phosphate + NADPH + H(+). Its pathway is membrane lipid metabolism; glycerophospholipid metabolism. Its function is as follows. Catalyzes the reduction of the glycolytic intermediate dihydroxyacetone phosphate (DHAP) to sn-glycerol 3-phosphate (G3P), the key precursor for phospholipid synthesis. This Pseudomonas fluorescens (strain ATCC BAA-477 / NRRL B-23932 / Pf-5) protein is Glycerol-3-phosphate dehydrogenase [NAD(P)+].